A 966-amino-acid polypeptide reads, in one-letter code: Catenin alpha-2 (966 aa).

Residues 924-940 (PEKKPLVKREKPEEYQT) are compositionally biased toward basic and acidic residues. Residues 924–952 (PEKKPLVKREKPEEYQTRVRRGSQKKHIS) are disordered. Positions 941–951 (RVRRGSQKKHI) are enriched in basic residues.

It belongs to the vinculin/alpha-catenin family.

Its subcellular location is the cell membrane. It is found in the cytoplasm. The protein localises to the cytoskeleton. It localises to the cell junction. The protein resides in the adherens junction. Its subcellular location is the cell projection. It is found in the axon. The protein localises to the nucleus. May function as a linker between cadherin adhesion receptors and the cytoskeleton to regulate cell-cell adhesion and differentiation in the nervous system. The sequence is that of Catenin alpha-2 (ctnna2) from Xenopus tropicalis (Western clawed frog).